The primary structure comprises 472 residues: Divalent metal cation transporter MntH (472 aa).

11 helical membrane passes run 59–79 (LLAF…PGNW), 92–112 (MLLS…ALAA), 144–164 (LAII…LNLL), 167–187 (VPII…LLLM), 196–216 (AFVI…IVLA), 233–253 (VVAD…TVMP), 288–308 (LALM…AAVF), 325–345 (LLAP…ALLA), 377–397 (VLTR…YGEQ), 402–422 (LLLL…IPLL), and 439–459 (WLMV…VKLL).

This sequence belongs to the NRAMP family.

Its subcellular location is the cell inner membrane. Its function is as follows. H(+)-stimulated, divalent metal cation uptake system. This is Divalent metal cation transporter MntH from Xylella fastidiosa (strain Temecula1 / ATCC 700964).